We begin with the raw amino-acid sequence, 268 residues long: Small ribosomal subunit protein eS1 (268 aa).

The interval 1–21 (MAVGKNKGLSKGGKKGGKKKV) is disordered.

The protein belongs to the eukaryotic ribosomal protein eS1 family. Component of the small ribosomal subunit. Mature ribosomes consist of a small (40S) and a large (60S) subunit. The 40S subunit contains about 33 different proteins and 1 molecule of RNA (18S). The 60S subunit contains about 49 different proteins and 3 molecules of RNA (28S, 5.8S and 5S).

It localises to the cytoplasm. Its function is as follows. Essential for oogenesis; required for late follicle cell development. The polypeptide is Small ribosomal subunit protein eS1 (Drosophila mojavensis (Fruit fly)).